The sequence spans 110 residues: PCNA-associated factor (110 aa).

Lys-15 participates in a covalent cross-link: Glycyl lysine isopeptide (Lys-Gly) (interchain with G-Cter in ubiquitin). The D-box signature appears at 23–34 (RKVLGSSTFVTN). An N6-acetyllysine; alternate modification is found at Lys-24. Lys-24 participates in a covalent cross-link: Glycyl lysine isopeptide (Lys-Gly) (interchain with G-Cter in ubiquitin); alternate. Residues Ser-28 and Ser-71 each carry the phosphoserine modification. Residues 28–39 (SSTFVTNSSSSS) show a composition bias toward low complexity. The tract at residues 28 to 110 (SSTFVTNSSS…QPDHRDDENE (83 aa)) is disordered. The PIP-box motif lies at 61 to 71 (QKGIGEFFRLS). The segment covering 71 to 80 (SPKESKKENQ) has biased composition (basic and acidic residues). The KEN box signature appears at 77–79 (KEN). The Initiation motif signature appears at 84–96 (EAGTSGLGKAKRK).

Interacts (when monoubiquitinated at Lys-15 and Lys-24) with PCNA. Interacts with isoform 2/p33ING1b of ING1. Interacts with BRCA1. In terms of processing, monoubiquitinated at Lys-15 and Lys-24 during normal S phase, promoting its association with PCNA. Also diubiquitinated at these 2 sites. Following DNA damage, monoubiquitin chains at Lys-15 and Lys-24 are probably extended, leading to disrupt the interaction with PCNA. Polyubiquitinated by the APC/C complex at the mitotic exit, leading to its degradation by the proteasome.

It localises to the nucleus. The protein resides in the cytoplasm. The protein localises to the perinuclear region. In terms of biological role, PCNA-binding protein that acts as a regulator of DNA repair during DNA replication. Following DNA damage, the interaction with PCNA is disrupted, facilitating the interaction between monoubiquitinated PCNA and the translesion DNA synthesis DNA polymerase eta (POLH) at stalled replisomes, facilitating the bypass of replication-fork-blocking lesions. Also acts as a regulator of centrosome number. This Mus musculus (Mouse) protein is PCNA-associated factor.